The primary structure comprises 441 residues: Serine carboxypeptidase-like 3 (441 aa).

A signal peptide spans 1–30 (MASNYVFSVLRSLLLLIHTVFLGQHHVSSA). Intrachain disulfides connect Cys88-Cys331, Cys252-Cys266, and Cys290-Cys297. The N-linked (GlcNAc...) asparagine glycan is linked to Asn109. Ser184 is a catalytic residue. A glycan (N-linked (GlcNAc...) asparagine) is linked at Asn350. Asp366 is a catalytic residue. N-linked (GlcNAc...) asparagine glycosylation occurs at Asn382. His419 is an active-site residue.

It belongs to the peptidase S10 family. Expressed in roots.

The protein resides in the secreted. Its function is as follows. Probable carboxypeptidase. The protein is Serine carboxypeptidase-like 3 (SCPL3) of Arabidopsis thaliana (Mouse-ear cress).